The sequence spans 129 residues: Ribosome-binding factor A (129 aa).

Belongs to the RbfA family. Monomer. Binds 30S ribosomal subunits, but not 50S ribosomal subunits or 70S ribosomes.

It localises to the cytoplasm. One of several proteins that assist in the late maturation steps of the functional core of the 30S ribosomal subunit. Associates with free 30S ribosomal subunits (but not with 30S subunits that are part of 70S ribosomes or polysomes). Required for efficient processing of 16S rRNA. May interact with the 5'-terminal helix region of 16S rRNA. This Ectopseudomonas mendocina (strain ymp) (Pseudomonas mendocina) protein is Ribosome-binding factor A.